The following is a 369-amino-acid chain: Putative 2-aminoethylphosphonate import ATP-binding protein PhnT (369 aa).

Residues 19-250 (IVLDSLRVAY…PPNRFASEFL (232 aa)) form the ABC transporter domain. Position 51 to 58 (51 to 58 (GPSGSGKT)) interacts with ATP.

This sequence belongs to the ABC transporter superfamily. 2-aminoethylphosphonate importer (TC 3.A.1.11.5) family.

It is found in the cell inner membrane. In terms of biological role, probably part of the PhnSTUV complex (TC 3.A.1.11.5) involved in 2-aminoethylphosphonate import. Probably responsible for energy coupling to the transport system. This Salmonella choleraesuis (strain SC-B67) protein is Putative 2-aminoethylphosphonate import ATP-binding protein PhnT (phnT).